Here is a 374-residue protein sequence, read N- to C-terminus: Putative glutamate--cysteine ligase 2 (374 aa).

The protein belongs to the glutamate--cysteine ligase type 2 family. YbdK subfamily.

The enzyme catalyses L-cysteine + L-glutamate + ATP = gamma-L-glutamyl-L-cysteine + ADP + phosphate + H(+). Functionally, ATP-dependent carboxylate-amine ligase which exhibits weak glutamate--cysteine ligase activity. The sequence is that of Putative glutamate--cysteine ligase 2 from Leptothrix cholodnii (strain ATCC 51168 / LMG 8142 / SP-6) (Leptothrix discophora (strain SP-6)).